The following is a 410-amino-acid chain: Elongation factor Tu (410 aa).

The tr-type G domain maps to Lys10–Val219. Residues Gly19–Thr26, Asp88–His92, and Asn143–Asp146 each bind GTP. Thr26 lines the Mg(2+) pocket.

This sequence belongs to the TRAFAC class translation factor GTPase superfamily. Classic translation factor GTPase family. EF-Tu/EF-1A subfamily. Monomer.

The protein localises to the cytoplasm. It catalyses the reaction GTP + H2O = GDP + phosphate + H(+). Its function is as follows. GTP hydrolase that promotes the GTP-dependent binding of aminoacyl-tRNA to the A-site of ribosomes during protein biosynthesis. This is Elongation factor Tu from Brachyspira hyodysenteriae (Treponema hyodysenteriae).